A 152-amino-acid chain; its full sequence is Transcriptional repressor NrdR (152 aa).

The segment at 3-34 is a zinc-finger region; the sequence is CPYCSYNESKVVDSRSTEDSISIRRRRECLEC. In terms of domain architecture, ATP-cone spans 49–139; the sequence is ILVIKKNLNR…VYRQFKDINT (91 aa).

The protein belongs to the NrdR family. Requires Zn(2+) as cofactor.

Functionally, negatively regulates transcription of bacterial ribonucleotide reductase nrd genes and operons by binding to NrdR-boxes. The protein is Transcriptional repressor NrdR of Clostridium tetani (strain Massachusetts / E88).